The chain runs to 107 residues: Glutaredoxin 4 (107 aa).

The Glutaredoxin domain occupies Leu-4 to His-106. Residue Lys-21 participates in glutathione binding. Residue Cys-29 participates in [2Fe-2S] cluster binding. Glutathione is bound by residues Arg-58, Phe-70, and Cys-83–Asp-84.

This sequence belongs to the glutaredoxin family. Monothiol subfamily. Homodimer.

Its subcellular location is the cytoplasm. Functionally, monothiol glutaredoxin involved in the biogenesis of iron-sulfur clusters. This chain is Glutaredoxin 4 (grxD), found in Haemophilus influenzae (strain ATCC 51907 / DSM 11121 / KW20 / Rd).